The primary structure comprises 266 residues: GTP cyclohydrolase III (266 aa).

Belongs to the archaeal-type GTP cyclohydrolase family.

It catalyses the reaction GTP + 3 H2O = 2-amino-5-formylamino-6-(5-phospho-D-ribosylamino)pyrimidin-4(3H)-one + 2 phosphate + 2 H(+). Its function is as follows. Catalyzes the formation of 2-amino-5-formylamino-6-ribofuranosylamino-4(3H)-pyrimidinone ribonucleotide monophosphate and inorganic phosphate from GTP. Also has an independent pyrophosphate phosphohydrolase activity. In Methanococcus maripaludis (strain C7 / ATCC BAA-1331), this protein is GTP cyclohydrolase III.